The chain runs to 180 residues: Small ribosomal subunit protein uS4 (180 aa).

Residues 103-165 (RRLQTLVYKK…KNSPFAKESH (63 aa)) enclose the S4 RNA-binding domain.

Belongs to the universal ribosomal protein uS4 family. As to quaternary structure, part of the 30S ribosomal subunit. Contacts protein S5. The interaction surface between S4 and S5 is involved in control of translational fidelity.

Functionally, one of the primary rRNA binding proteins, it binds directly to 16S rRNA where it nucleates assembly of the body of the 30S subunit. With S5 and S12 plays an important role in translational accuracy. The sequence is that of Small ribosomal subunit protein uS4 from Thermococcus gammatolerans (strain DSM 15229 / JCM 11827 / EJ3).